Reading from the N-terminus, the 489-residue chain is MVTTPSFKPTYEQNTFKLSPTATTTTLPWNNTSLPTTPLFGTDGIRGKAGELLTAPMALQIGFWAGQVLPQYCQNPGPIIMGQDTRNSGNMLAMALSAGLTAAGLEVWNLGLCPTPCVAYITSISEAIGGVMISASHNPPEDNGIKFFGSDGTKLSSELQQKIESGIRGTANFPTNHSNWGQHYHRPELVKEYQASLHSPLTPGSLQGMKIVLDLAWGAAVHTAPEVFRGMGAEIICLHDQPNGDRINVNCGSTHLSHLQQAVIEHNANLGFAFDGDADRVLAIDSQGRSIDGDYILYFWGQSLSKARLLPNNLIVTTVMANLGFEHAWNKQGGKILRTKVGDQYVHAEMQRTGSMLGGEQSGHVLCPHYGITGDGLMTALHLATLVKNSGISLAELVDQSFKTYPQLLRNVRVEDRDRRANWKNCEPLVKTIEEAETALADLGRVLVRASGTEPVIRVMVEAINLELAKSWTENIVLAVQQHLLPTKD.

The Phosphoserine intermediate role is filled by serine 136. Residues serine 136, aspartate 275, aspartate 277, and aspartate 279 each coordinate Mg(2+). At serine 136 the chain carries Phosphoserine.

This sequence belongs to the phosphohexose mutase family. The cofactor is Mg(2+). In terms of processing, activated by phosphorylation.

It carries out the reaction alpha-D-glucosamine 1-phosphate = D-glucosamine 6-phosphate. Functionally, catalyzes the conversion of glucosamine-6-phosphate to glucosamine-1-phosphate. The sequence is that of Phosphoglucosamine mutase from Trichodesmium erythraeum (strain IMS101).